The sequence spans 502 residues: Maturase K (502 aa).

The protein belongs to the intron maturase 2 family. MatK subfamily.

It localises to the plastid. The protein localises to the chloroplast. Usually encoded in the trnK tRNA gene intron. Probably assists in splicing its own and other chloroplast group II introns. The polypeptide is Maturase K (Vitis vinifera (Grape)).